A 336-amino-acid polypeptide reads, in one-letter code: N-acetyl-gamma-glutamyl-phosphate reductase (336 aa).

Cysteine 156 is an active-site residue.

The protein belongs to the NAGSA dehydrogenase family. Type 1 subfamily.

The protein localises to the cytoplasm. It carries out the reaction N-acetyl-L-glutamate 5-semialdehyde + phosphate + NADP(+) = N-acetyl-L-glutamyl 5-phosphate + NADPH + H(+). Its pathway is amino-acid biosynthesis; L-arginine biosynthesis; N(2)-acetyl-L-ornithine from L-glutamate: step 3/4. Catalyzes the NADPH-dependent reduction of N-acetyl-5-glutamyl phosphate to yield N-acetyl-L-glutamate 5-semialdehyde. The sequence is that of N-acetyl-gamma-glutamyl-phosphate reductase from Moritella profunda.